The following is a 298-amino-acid chain: MEGMDVDLDPELMQKFSCLGTTDKDVLISEFQRLLGFQLNPAGCAFFLDMTNWNLQAAIGAYYDFESPNISVPSMSFVEDVTIGEGESIPPDTQFVKTWRIQNSGAEAWPPGVCLKYVGGDQFGHVNMVMVRSLEPQEIADVSVQMCSPSRAGMYQGQWRMCTATGLYYGDVIWVILSVEVGGLLGVTQQLSSFETEFNTQPHRKVEGNFNPFASPQKNRQSDENNLKDPGGSEFDSISKNTWAPAPDTWAPAPDQTEQDQNRLSQNSVNLSPSSHANNLSVVTYSKGLHGPYPFGQS.

The segment at 199-277 is disordered; it reads NTQPHRKVEG…SVNLSPSSHA (79 aa). Phosphoserine is present on residues S215 and S222. The span at 242 to 255 shows a compositional bias: low complexity; the sequence is TWAPAPDTWAPAPD. Polar residues predominate over residues 262-277; that stretch reads NRLSQNSVNLSPSSHA. S272 is subject to Phosphoserine.

As to quaternary structure, interacts with IRF3; the interaction inhibits IRF3 binding to its DNA consensus sequence. As to expression, expressed in lung (at protein level).

The protein localises to the cytoplasm. It localises to the nucleus. In terms of biological role, negative regulator of innate antiviral response. Blocks IRF3-dependent cytokine production such as IFNA, IFNB and TNF. Interacts with IRF3 and inhibits IRF3 recruitment to type I IFN promoter sequences while also reducing nuclear levels of the coactivators EP300 and CREBBP. In Homo sapiens (Human), this protein is Protein ILRUN.